The chain runs to 401 residues: Multidrug resistance protein MdtA (401 aa).

An N-terminal signal peptide occupies residues 1 to 20 (MNQNNKHRTLLFRAALAAIA).

Belongs to the membrane fusion protein (MFP) (TC 8.A.1) family. As to quaternary structure, part of a tripartite efflux system composed of MdtA, MdtB and MdtC.

It is found in the cell inner membrane. This chain is Multidrug resistance protein MdtA, found in Photorhabdus laumondii subsp. laumondii (strain DSM 15139 / CIP 105565 / TT01) (Photorhabdus luminescens subsp. laumondii).